Here is a 130-residue protein sequence, read N- to C-terminus: Fluoride-specific ion channel FluC (130 aa).

4 consecutive transmembrane segments (helical) span residues 3–23, 38–58, 67–87, and 102–122; these read FVFLWAALGGAIGSSLRYFVG, LGTFSVNIIGCFVIGFMGHLA, FGIFFVTGVLGGFTTFSSYGL, and ISYVLGTNLLGLIGVAIGWFL. The Na(+) site is built by G77 and T80.

This sequence belongs to the fluoride channel Fluc/FEX (TC 1.A.43) family.

It is found in the cell inner membrane. It carries out the reaction fluoride(in) = fluoride(out). Its activity is regulated as follows. Na(+) is not transported, but it plays an essential structural role and its presence is essential for fluoride channel function. In terms of biological role, fluoride-specific ion channel. Important for reducing fluoride concentration in the cell, thus reducing its toxicity. This chain is Fluoride-specific ion channel FluC, found in Helicobacter pylori (strain G27).